The primary structure comprises 611 residues: Sodium-coupled monocarboxylate transporter 1 (611 aa).

Topologically, residues 1-9 (MDASRDIGS) are extracellular. The chain crosses the membrane as a helical span at residues 10-30 (FVVWDYVVFAGMLLISAAIGI). The Cytoplasmic segment spans residues 31–51 (YYAFAGGGQQTSKDFLMGGRS). A helical membrane pass occupies residues 52–72 (MSAVPVALSLTASFMSAVTVL). Over 73-86 (GTPAEVYRFGAIFS) the chain is Extracellular. Residues 87–107 (IFVITYFFVVVISAEVFLPVF) traverse the membrane as a helical segment. Residues 108 to 132 (YRLGITSTYEYLELRFNRCIRLCGT) are Cytoplasmic-facing. A helical transmembrane segment spans residues 133-153 (ILFIVQTILYTGIVIYAPALA). The Extracellular segment spans residues 154–161 (LNQVTGFD). Residues 162-182 (LWGAVVATGVVCTFYCTLGGL) form a helical membrane-spanning segment. The Cytoplasmic portion of the chain corresponds to 183 to 184 (KA). Residues 185–205 (VVWTDVFQVGIMVAGFASVII) traverse the membrane as a helical segment. Topologically, residues 206 to 239 (QASITQHGINKILSDAFNGGRLNFWNFDPNPLQR) are extracellular. A helical membrane pass occupies residues 240–260 (HTFWTIVIGGTFTWTTIYGVN). Topologically, residues 261-279 (QSQVQRYISCKSRLHAKLS) are cytoplasmic. Residues 280 to 300 (LYVNLVGLWVILTCSIFCGLA) traverse the membrane as a helical segment. Residues 301 to 336 (LYSRYRECDPWTSKKVSAIDQLMPYLVLDILKNYPG) are Extracellular-facing. Residues 337 to 359 (VPGLFVACAYSGTLSTVSSSINA) form a helical membrane-spanning segment. The Cytoplasmic portion of the chain corresponds to 360-389 (LAAVTVEDLIKPRFKSLSEKSLSWISQGMS). Residues 390 to 410 (VLYGALCIGMAALASLMGALL) form a helical membrane-spanning segment. The Extracellular portion of the chain corresponds to 411-415 (QAALS). A helical transmembrane segment spans residues 416 to 436 (IFGMVGGPLLGLFSLGILVPF). At 437-439 (ANS) the chain is on the cytoplasmic side. The helical transmembrane segment at 440–460 (IGALTGLLAGFAISLWVGIGA) threads the bilayer. The Extracellular segment spans residues 461 to 518 (QLYPPLPERTLPLPLETYGCNITHNGSDWMSTTEMPFSTSAFQIHNAERTPLMDNWYS). N-linked (GlcNAc...) asparagine glycosylation is present at Asn485. The chain crosses the membrane as a helical span at residues 519–539 (LSYLYFSTIGTLTTLFVGILI). Residues 540–611 (SLSTGGRKQN…HSGKINGTRL (72 aa)) lie on the Cytoplasmic side of the membrane. Residues 609–611 (TRL) carry the PDZ-binding motif.

It belongs to the sodium:solute symporter (SSF) (TC 2.A.21) family. Interacts (via PDZ-binding motif) with PDZK1 (via PDZ domains 1 and 3); interaction increases nicotinate transport activity of SLC5A8. In terms of tissue distribution, expressed in brain, colon, kidney and in the ileum and jejunum of small intestine. In the kidney, expression occurred in the proximal tubule and the loop of Henle, being restricted to tubular epithelial cells in both the cortex and the medulla. In the colon, predominantly expressed in the distal half of the large bowel and in the most terminal ileum. Localized selectively in the luminal surface of crypts in the large intestine and to the brush border in the middle parts of crypts in the cecum. In the brain, expression was seen throughout, exclusively in neurons, including the cortex, hippocampus, cerebellum and pituitary gland (at protein level). Expression is reduced in oligodendrogliomas.

It localises to the apical cell membrane. The catalysed reaction is (S)-lactate(out) + 2 Na(+)(out) = (S)-lactate(in) + 2 Na(+)(in). It catalyses the reaction propanoate(out) + 2 Na(+)(out) = propanoate(in) + 2 Na(+)(in). The enzyme catalyses pyruvate(out) + 2 Na(+)(out) = pyruvate(in) + 2 Na(+)(in). It carries out the reaction acetate(out) + 2 Na(+)(out) = acetate(in) + 2 Na(+)(in). The catalysed reaction is butanoate(out) + 2 Na(+)(out) = butanoate(in) + 2 Na(+)(in). It catalyses the reaction nicotinate(out) + 2 Na(+)(out) = nicotinate(in) + 2 Na(+)(in). The enzyme catalyses (R)-3-hydroxybutanoate(out) + 2 Na(+)(out) = (R)-3-hydroxybutanoate(in) + 2 Na(+)(in). It carries out the reaction acetoacetate(out) + 2 Na(+)(out) = acetoacetate(in) + 2 Na(+)(in). The catalysed reaction is 4-methyl-2-oxopentanoate(out) + 2 Na(+)(out) = 4-methyl-2-oxopentanoate(in) + 2 Na(+)(in). It catalyses the reaction 5-oxo-L-proline(out) + 2 Na(+)(out) = 5-oxo-L-proline(in) + 2 Na(+)(in). The enzyme catalyses iodide(out) = iodide(in). It carries out the reaction chloride(in) = chloride(out). The catalysed reaction is nitrate(in) = nitrate(out). It catalyses the reaction bromide(in) = bromide(out). Transport of D-lactate and pyruvate stimulated by alpha-cyano-4-hydroxycinnamic acid, but inhibited by the short-chain fatty acids acetate, propionate and butyrate. Acts as an electrogenic sodium (Na(+)) and chloride (Cl-)-dependent sodium-coupled solute transporter, including transport of monocarboxylates (short-chain fatty acids including L-lactate, D-lactate, pyruvate, acetate, propionate, valerate and butyrate), mocarboxylate drugs (nicotinate, benzoate, salicylate and 5-aminosalicylate) and ketone bodies (beta-D-hydroxybutyrate, acetoacetate and alpha-ketoisocaproate), with a Na(+):substrate stoichiometry of between 4:1 and 2:1. Catalyzes passive carrier mediated diffusion of iodide. Mediates iodide transport from the thyrocyte into the colloid lumen through the apical membrane. May be responsible for the absorption of D-lactate and monocarboxylate drugs from the intestinal tract. May play a critical role in the entry of L-lactate and ketone bodies into neurons by a process driven by an electrochemical Na(+) gradient and hence contribute to the maintenance of the energy status and function of neurons. Mediates sodium-coupled electrogenic transport of pyroglutamate (5-oxo-L-proline). Can mediate the transport of chloride, bromide, iodide and nitrate ions when external concentration of sodium ions is reduced. The protein is Sodium-coupled monocarboxylate transporter 1 of Mus musculus (Mouse).